The chain runs to 350 residues: Nicotinate-nucleotide--dimethylbenzimidazole phosphoribosyltransferase (350 aa).

Glu-316 serves as the catalytic Proton acceptor.

It belongs to the CobT family.

The enzyme catalyses 5,6-dimethylbenzimidazole + nicotinate beta-D-ribonucleotide = alpha-ribazole 5'-phosphate + nicotinate + H(+). The protein operates within nucleoside biosynthesis; alpha-ribazole biosynthesis; alpha-ribazole from 5,6-dimethylbenzimidazole: step 1/2. Its function is as follows. Catalyzes the synthesis of alpha-ribazole-5'-phosphate from nicotinate mononucleotide (NAMN) and 5,6-dimethylbenzimidazole (DMB). The sequence is that of Nicotinate-nucleotide--dimethylbenzimidazole phosphoribosyltransferase from Pseudomonas savastanoi pv. phaseolicola (strain 1448A / Race 6) (Pseudomonas syringae pv. phaseolicola (strain 1448A / Race 6)).